A 362-amino-acid polypeptide reads, in one-letter code: UPF0283 membrane protein Arad_2632 (362 aa).

Basic and acidic residues predominate over residues 1–11 (MTKPTEDDPKG). The segment at 1 to 47 (MTKPTEDDPKGISRRPAAFSLEQEASREGAHTKTTAETPRRKPQSFD) is disordered. 2 consecutive transmembrane segments (helical) span residues 82–102 (FSFG…AFGL) and 118–138 (LGYT…AIVV).

This sequence belongs to the UPF0283 family.

Its subcellular location is the cell inner membrane. In Rhizobium rhizogenes (strain K84 / ATCC BAA-868) (Agrobacterium radiobacter), this protein is UPF0283 membrane protein Arad_2632.